The following is a 374-amino-acid chain: Negative elongation factor E (374 aa).

Positions 7-36 (GLSEEEEALQKKFNKLKKKKKALLALKKQS) form a coiled coil. Over residues 30-43 (LALKKQSSSSTASQ) the composition is skewed to low complexity. The segment at 30–58 (LALKKQSSSSTASQGGVKRSLSEQPVVDT) is disordered. Residue S51 is modified to Phosphoserine. A Glycyl lysine isopeptide (Lys-Gly) (interchain with G-Cter in SUMO1); alternate cross-link involves residue K78. Residue K78 forms a Glycyl lysine isopeptide (Lys-Gly) (interchain with G-Cter in SUMO2); alternate linkage. Residues 79 to 252 (AETKNSGFKR…SDSFPERRAP (174 aa)) form a disordered region. K82 participates in a covalent cross-link: Glycyl lysine isopeptide (Lys-Gly) (interchain with G-Cter in SUMO2). A compositionally biased stretch (basic and acidic residues) spans 90–101 (RTLEGKLKDPEK). 2 positions are modified to phosphoserine: S113 and S115. At E122 the chain carries PolyADP-ribosyl glutamic acid. A phosphoserine mark is found at S131 and S139. E151 carries the post-translational modification PolyADP-ribosyl glutamic acid. S165 carries the phosphoserine modification. PolyADP-ribosyl glutamic acid is present on E172. S179, S181, S185, and S187 each carry phosphoserine. A run of 27 repeats spans residues 184-185 (RS), 186-187 (RS), 188-189 (RD), 190-191 (RS), 192-193 (RE), 194-195 (RN), 196-197 (RD), 198-199 (RD), 200-201 (RD), 202-203 (RD), 204-205 (RE), 206-207 (RD), 208-209 (RE), 210-211 (RD), 212-213 (RD), 214-215 (RD), 216-217 (RD), 218-219 (RE), 220-221 (RD), 222-223 (RD), 224-225 (RD), 226-227 (RD), 228-229 (RD), 230-231 (RD), 232-233 (RE), 234-235 (RD), and 236-237 (RE). Positions 184–237 (RSRSRDRSRERNRDRDRDRDRERDRERDRDRDRDRERDRDRDRDRDRDRERDRE) are 27 X 2 AA approximate tandem repeats of R-[DSNE]. A compositionally biased stretch (basic and acidic residues) spans 186–250 (RSRDRSRERN…RRSDSFPERR (65 aa)). Residue S191 is modified to Phosphoserine. A phosphoserine mark is found at S243 and S245. In terms of domain architecture, RRM spans 256–326 (NTLYVYGEDM…VQLKVSIARK (71 aa)). Phosphothreonine occurs at positions 266 and 268. S275 and S347 each carry phosphoserine. At E368 the chain carries PolyADP-ribosyl glutamic acid.

This sequence belongs to the RRM NELF-E family. In terms of assembly, the NELF complex is composed of NELFA, NELFB, NELFCD and NELFE. Interacts with NELFB. Post-translationally, phosphorylated by the P-TEFb complex at sites next to its RNA recognition motif, promoting its release from chromatin. In terms of processing, sumoylated. Poly-ADP-ribosylated by PARP1, thereby preventing RNA-binding and relieving transcription pausing.

It is found in the nucleus. The protein resides in the chromosome. Functionally, essential component of the NELF complex, a complex that negatively regulates the elongation of transcription by RNA polymerase II. The NELF complex, which acts via an association with the DSIF complex and causes transcriptional pausing, is counteracted by the P-TEFb kinase complex. Provides the strongest RNA binding activity of the NELF complex and may initially recruit the NELF complex to RNA. In Bos taurus (Bovine), this protein is Negative elongation factor E (NELFE).